We begin with the raw amino-acid sequence, 180 residues long: UPF0340 protein YwlG (180 aa).

Belongs to the UPF0340 family.

This Bacillus subtilis (strain 168) protein is UPF0340 protein YwlG (ywlG).